A 110-amino-acid polypeptide reads, in one-letter code: uncharacterized protein (110 aa).

The N-terminal stretch at 1–19 (MKYLVGCLCLAAICLSAGA) is a signal peptide. The N-linked (GlcNAc...) asparagine glycan is linked to asparagine 101.

Component of the acid-soluble and acid-insoluble organic matrix of prismatic shell layers (at protein level).

Its subcellular location is the secreted. This is an uncharacterized protein from Haliotis asinina (Donkey's ear abalone).